A 912-amino-acid polypeptide reads, in one-letter code: Isoleucine--tRNA ligase (912 aa).

The short motif at 57–67 (PYANGDIHLGT) is the 'HIGH' region element. L-isoleucyl-5'-AMP is bound at residue Glu549. A 'KMSKS' region motif is present at residues 590–594 (KMSKS). Lys593 contacts ATP. 4 residues coordinate Zn(2+): Cys880, Cys883, Cys900, and Cys903.

It belongs to the class-I aminoacyl-tRNA synthetase family. IleS type 1 subfamily. In terms of assembly, monomer. Requires Zn(2+) as cofactor.

It is found in the cytoplasm. It catalyses the reaction tRNA(Ile) + L-isoleucine + ATP = L-isoleucyl-tRNA(Ile) + AMP + diphosphate. In terms of biological role, catalyzes the attachment of isoleucine to tRNA(Ile). As IleRS can inadvertently accommodate and process structurally similar amino acids such as valine, to avoid such errors it has two additional distinct tRNA(Ile)-dependent editing activities. One activity is designated as 'pretransfer' editing and involves the hydrolysis of activated Val-AMP. The other activity is designated 'posttransfer' editing and involves deacylation of mischarged Val-tRNA(Ile). This is Isoleucine--tRNA ligase from Fervidobacterium pennivorans (strain DSM 9078 / Ven5).